A 318-amino-acid chain; its full sequence is Fibronectin type III domain-containing protein 11 (318 aa).

A Fibronectin type-III domain is found at 210–307; sequence VVFDRKASAA…DSLTLHTKPE (98 aa).

This is Fibronectin type III domain-containing protein 11 (FNDC11) from Homo sapiens (Human).